We begin with the raw amino-acid sequence, 238 residues long: Phosphoribosylaminoimidazole-succinocarboxamide synthase (238 aa).

Belongs to the SAICAR synthetase family.

It carries out the reaction 5-amino-1-(5-phospho-D-ribosyl)imidazole-4-carboxylate + L-aspartate + ATP = (2S)-2-[5-amino-1-(5-phospho-beta-D-ribosyl)imidazole-4-carboxamido]succinate + ADP + phosphate + 2 H(+). The protein operates within purine metabolism; IMP biosynthesis via de novo pathway; 5-amino-1-(5-phospho-D-ribosyl)imidazole-4-carboxamide from 5-amino-1-(5-phospho-D-ribosyl)imidazole-4-carboxylate: step 1/2. The polypeptide is Phosphoribosylaminoimidazole-succinocarboxamide synthase (Desulfitobacterium hafniense (strain DSM 10664 / DCB-2)).